Consider the following 131-residue polypeptide: Small ribosomal subunit protein uS8 (131 aa).

This sequence belongs to the universal ribosomal protein uS8 family. As to quaternary structure, part of the 30S ribosomal subunit. Contacts proteins S5 and S12.

In terms of biological role, one of the primary rRNA binding proteins, it binds directly to 16S rRNA central domain where it helps coordinate assembly of the platform of the 30S subunit. The sequence is that of Small ribosomal subunit protein uS8 from Dehalococcoides mccartyi (strain CBDB1).